Reading from the N-terminus, the 415-residue chain is Queuine tRNA-ribosyltransferase accessory subunit 2 (415 aa).

4 residues coordinate Zn(2+): Cys351, Cys353, Cys356, and His382.

Belongs to the queuine tRNA-ribosyltransferase family. QTRT2 subfamily. Heterodimer of a catalytic subunit qtrt1 and an accessory subunit qtrt2. Zn(2+) is required as a cofactor.

It localises to the cytoplasm. Its subcellular location is the mitochondrion outer membrane. Non-catalytic subunit of the queuine tRNA-ribosyltransferase (TGT) that catalyzes the base-exchange of a guanine (G) residue with queuine (Q) at position 34 (anticodon wobble position) in tRNAs with GU(N) anticodons (tRNA-Asp, -Asn, -His and -Tyr), resulting in the hypermodified nucleoside queuosine (7-(((4,5-cis-dihydroxy-2-cyclopenten-1-yl)amino)methyl)-7-deazaguanosine). The protein is Queuine tRNA-ribosyltransferase accessory subunit 2 of Xenopus laevis (African clawed frog).